Consider the following 474-residue polypeptide: Glutamate--tRNA ligase (474 aa).

A 'HIGH' region motif is present at residues 9 to 19 (PSPTGYLHVGG). The 'KMSKS' region signature appears at 240–244 (KLSKR). Residue Lys-243 coordinates ATP.

Belongs to the class-I aminoacyl-tRNA synthetase family. Glutamate--tRNA ligase type 1 subfamily. Monomer.

It is found in the cytoplasm. The catalysed reaction is tRNA(Glu) + L-glutamate + ATP = L-glutamyl-tRNA(Glu) + AMP + diphosphate. Catalyzes the attachment of glutamate to tRNA(Glu) in a two-step reaction: glutamate is first activated by ATP to form Glu-AMP and then transferred to the acceptor end of tRNA(Glu). The chain is Glutamate--tRNA ligase from Aliivibrio fischeri (strain MJ11) (Vibrio fischeri).